A 389-amino-acid chain; its full sequence is Mannitol-1-phosphate 5-dehydrogenase (389 aa).

7–18 (AVHFGGGNIGRG) contacts NAD(+). The active site involves K216.

The protein belongs to the mannitol dehydrogenase family. In terms of assembly, monomer.

It catalyses the reaction D-mannitol 1-phosphate + NAD(+) = beta-D-fructose 6-phosphate + NADH + H(+). In terms of biological role, catalyzes the NAD(H)-dependent interconversion of D-fructose 6-phosphate and D-mannitol 1-phosphate in the mannitol metabolic pathway. This chain is Mannitol-1-phosphate 5-dehydrogenase, found in Pyrenophora tritici-repentis (strain Pt-1C-BFP) (Wheat tan spot fungus).